The chain runs to 129 residues: Small ribosomal subunit protein uS11 (129 aa).

The protein belongs to the universal ribosomal protein uS11 family. Part of the 30S ribosomal subunit. Interacts with proteins S7 and S18. Binds to IF-3.

Located on the platform of the 30S subunit, it bridges several disparate RNA helices of the 16S rRNA. Forms part of the Shine-Dalgarno cleft in the 70S ribosome. The chain is Small ribosomal subunit protein uS11 from Hyphomonas neptunium (strain ATCC 15444).